A 124-amino-acid polypeptide reads, in one-letter code: Probable cytochrome b5 1 (124 aa).

Residues 3–79 (VKYFEPEEIV…LEEMYIGDLK (77 aa)) form the Cytochrome b5 heme-binding domain. Positions 38 and 62 each coordinate heme. Residues 100–120 (PPLPLLIALIVLPAIAVIVFV) form a helical membrane-spanning segment.

The protein belongs to the cytochrome b5 family.

It is found in the endoplasmic reticulum membrane. It localises to the microsome membrane. Functionally, membrane bound hemoprotein which function as an electron carrier for several membrane bound oxygenases. The sequence is that of Probable cytochrome b5 1 from Schizosaccharomyces pombe (strain 972 / ATCC 24843) (Fission yeast).